We begin with the raw amino-acid sequence, 278 residues long: Large ribosomal subunit protein uL2 (278 aa).

2 disordered regions span residues 33 to 57 (LIRP…KGGG) and 224 to 278 (VVMN…GKKR). Residues 45–57 (AHGRITTRHKGGG) show a composition bias toward basic residues. Positions 253-268 (PEGRTRKPNKASDKLI) are enriched in basic and acidic residues. Residues 269-278 (VRRRRTGKKR) show a composition bias toward basic residues.

Belongs to the universal ribosomal protein uL2 family. As to quaternary structure, part of the 50S ribosomal subunit. Forms a bridge to the 30S subunit in the 70S ribosome.

Its function is as follows. One of the primary rRNA binding proteins. Required for association of the 30S and 50S subunits to form the 70S ribosome, for tRNA binding and peptide bond formation. It has been suggested to have peptidyltransferase activity; this is somewhat controversial. Makes several contacts with the 16S rRNA in the 70S ribosome. The polypeptide is Large ribosomal subunit protein uL2 (Mycobacteroides abscessus (strain ATCC 19977 / DSM 44196 / CCUG 20993 / CIP 104536 / JCM 13569 / NCTC 13031 / TMC 1543 / L948) (Mycobacterium abscessus)).